Reading from the N-terminus, the 578-residue chain is Sulfite reductase [NADPH] hemoprotein beta-component (578 aa).

Positions 441, 447, 487, and 491 each coordinate [4Fe-4S] cluster. Residue C491 participates in siroheme binding.

Belongs to the nitrite and sulfite reductase 4Fe-4S domain family. Alpha(8)-beta(8). The alpha component is a flavoprotein, the beta component is a hemoprotein. Siroheme serves as cofactor. The cofactor is [4Fe-4S] cluster.

It carries out the reaction hydrogen sulfide + 3 NADP(+) + 3 H2O = sulfite + 3 NADPH + 4 H(+). It functions in the pathway sulfur metabolism; hydrogen sulfide biosynthesis; hydrogen sulfide from sulfite (NADPH route): step 1/1. In terms of biological role, component of the sulfite reductase complex that catalyzes the 6-electron reduction of sulfite to sulfide. This is one of several activities required for the biosynthesis of L-cysteine from sulfate. The chain is Sulfite reductase [NADPH] hemoprotein beta-component from Vibrio parahaemolyticus serotype O3:K6 (strain RIMD 2210633).